A 263-amino-acid polypeptide reads, in one-letter code: uncharacterized protein (263 aa).

A Response regulatory domain is found at 6 to 121 (TAIIADDEPL…RLQTTCERVK (116 aa)). Residue aspartate 58 is modified to 4-aspartylphosphate. The 106-residue stretch at 158–263 (IKATQGDDIH…RASQSLFKGM (106 aa)) folds into the HTH LytTR-type domain.

This is an uncharacterized protein from Vibrio parahaemolyticus serotype O3:K6 (strain RIMD 2210633).